A 241-amino-acid chain; its full sequence is Ribonuclease P protein component 3 (241 aa).

Belongs to the eukaryotic/archaeal RNase P protein component 3 family. Consists of a catalytic RNA component and at least 4-5 protein subunits.

It is found in the cytoplasm. The catalysed reaction is Endonucleolytic cleavage of RNA, removing 5'-extranucleotides from tRNA precursor.. In terms of biological role, part of ribonuclease P, a protein complex that generates mature tRNA molecules by cleaving their 5'-ends. The chain is Ribonuclease P protein component 3 from Methanococcoides burtonii (strain DSM 6242 / NBRC 107633 / OCM 468 / ACE-M).